Reading from the N-terminus, the 106-residue chain is Large ribosomal subunit protein uL23 (106 aa).

The protein belongs to the universal ribosomal protein uL23 family. As to quaternary structure, part of the 50S ribosomal subunit. Contacts protein L29, and trigger factor when it is bound to the ribosome.

One of the early assembly proteins it binds 23S rRNA. One of the proteins that surrounds the polypeptide exit tunnel on the outside of the ribosome. Forms the main docking site for trigger factor binding to the ribosome. The sequence is that of Large ribosomal subunit protein uL23 from Acinetobacter baylyi (strain ATCC 33305 / BD413 / ADP1).